The following is a 211-amino-acid chain: Ribosomal RNA small subunit methyltransferase G (211 aa).

S-adenosyl-L-methionine is bound by residues Gly-73, Phe-78, Val-124–Glu-125, and Arg-137.

Belongs to the methyltransferase superfamily. RNA methyltransferase RsmG family.

The protein resides in the cytoplasm. Its function is as follows. Specifically methylates the N7 position of a guanine in 16S rRNA. The protein is Ribosomal RNA small subunit methyltransferase G of Christiangramia forsetii (strain DSM 17595 / CGMCC 1.15422 / KT0803) (Gramella forsetii).